The chain runs to 28 residues: SNKKDYRKEIVDKHNALSRSVKPTASNM.

Positions 1–15 (SNKKDYRKEIVDKHN) are enriched in basic and acidic residues. The tract at residues 1 to 28 (SNKKDYRKEIVDKHNALSRSVKPTASNM) is disordered. Polar residues predominate over residues 17-28 (LSRSVKPTASNM).

It belongs to the CRISP family. Contains 8 disulfide bonds. In terms of tissue distribution, expressed by the venom gland.

Its subcellular location is the secreted. Blocks contraction of smooth muscle elicited by high potassium-induced depolarization, but does not block caffeine-stimulated contraction. May target voltage-gated calcium channels on smooth muscle. This is Cysteine-rich venom protein asurin-2 from Austrelaps superbus (Lowland copperhead snake).